We begin with the raw amino-acid sequence, 89 residues long: Small ribosomal subunit protein uS14 (89 aa).

It belongs to the universal ribosomal protein uS14 family. In terms of assembly, part of the 30S ribosomal subunit. Contacts proteins S3 and S10.

In terms of biological role, binds 16S rRNA, required for the assembly of 30S particles and may also be responsible for determining the conformation of the 16S rRNA at the A site. The protein is Small ribosomal subunit protein uS14 of Cytophaga hutchinsonii (strain ATCC 33406 / DSM 1761 / CIP 103989 / NBRC 15051 / NCIMB 9469 / D465).